Reading from the N-terminus, the 244-residue chain is Uridylate kinase (244 aa).

11–14 lines the ATP pocket; that stretch reads KLSG. The interval 19–24 is involved in allosteric activation by GTP; that stretch reads GSLGYG. G53 provides a ligand contact to UMP. G54 and R58 together coordinate ATP. UMP is bound by residues D73 and 134-141; that span reads SGNPFFTT. Positions 161, 167, and 170 each coordinate ATP.

Belongs to the UMP kinase family. Homohexamer.

The protein resides in the cytoplasm. It catalyses the reaction UMP + ATP = UDP + ADP. It participates in pyrimidine metabolism; CTP biosynthesis via de novo pathway; UDP from UMP (UMPK route): step 1/1. Its activity is regulated as follows. Allosterically activated by GTP. Inhibited by UTP. Functionally, catalyzes the reversible phosphorylation of UMP to UDP. This chain is Uridylate kinase, found in Trichodesmium erythraeum (strain IMS101).